A 201-amino-acid polypeptide reads, in one-letter code: Ribosome maturation factor RimP (201 aa).

The protein belongs to the RimP family.

The protein localises to the cytoplasm. Required for maturation of 30S ribosomal subunits. In Acidiphilium cryptum (strain JF-5), this protein is Ribosome maturation factor RimP.